A 1460-amino-acid polypeptide reads, in one-letter code: Nonribosomal peptide synthetase 6 (1460 aa).

The segment at 63 to 468 is adenylation; the sequence is EQAALHPEKI…GRQDQQVKLR (406 aa). Positions 600–675 constitute a Carrier 1 domain; the sequence is EPTTEMEIKL…AMATKIKPLS (76 aa). O-(pantetheine 4'-phosphoryl)serine is present on Ser636. The tract at residues 712–1135 is condensation; it reads VQDVYPCTPL…AVLDPSEAQD (424 aa). Carrier domains are found at residues 1168 to 1241 and 1236 to 1312; these read SPNE…GNEK and SIGN…EETD. O-(pantetheine 4'-phosphoryl)serine is present on residues Ser1202 and Ser1273. Residues 1303–1324 form a disordered region; sequence ELASSAEETDSPQTETNSNAPY. Over residues 1313–1322 the composition is skewed to polar residues; that stretch reads SPQTETNSNA.

The protein belongs to the NRP synthetase family.

It participates in siderophore biosynthesis. Functionally, NRPS involved in extracellular coprogen-type siderophores biosynthesis. The role of extracellular siderophores in fungal virulence to plants is to supply iron to the fungus during plant infection, but not to act as phytotoxins, depriving their hosts of iron. The polypeptide is Nonribosomal peptide synthetase 6 (Alternaria brassicicola (Dark leaf spot agent)).